A 367-amino-acid chain; its full sequence is snRNA-activating protein complex subunit 1 (367 aa).

The interval 1–168 (MGTPPGLQTD…EEFKDPSDRV (168 aa)) is SNAPC3-binding. The segment at 164 to 268 (PSDRVMKLIT…AESLAKIKSK (105 aa)) is SNAPC4-binding. Disordered stretches follow at residues 228 to 254 (KDRK…QETE) and 278 to 367 (KSRR…KRKH). The segment covering 238-254 (KINDGEEKMEGNSQETE) has biased composition (basic and acidic residues). A phosphoserine mark is found at serine 289 and serine 290. A compositionally biased stretch (polar residues) spans 292 to 301 (CDSASGQGQV).

In terms of assembly, part of the SNAPc complex composed of 5 subunits: SNAPC1, SNAPC2, SNAPC3, SNAPC4 and SNAPC5. SNAPC1 interacts with SNAPC3, SNAPC4 and TBP.

The protein resides in the nucleus. Functionally, part of the SNAPc complex required for the transcription of both RNA polymerase II and III small-nuclear RNA genes. Binds to the proximal sequence element (PSE), a non-TATA-box basal promoter element common to these 2 types of genes. Recruits TBP and BRF2 to the U6 snRNA TATA box. The sequence is that of snRNA-activating protein complex subunit 1 (SNAPC1) from Macaca fascicularis (Crab-eating macaque).